The primary structure comprises 143 residues: Hemoglobin subunit alpha-2 (143 aa).

Serine 2 is modified (N-acetylserine). The region spanning 2–143 (SLSSKQKATV…LALALAEKYR (142 aa)) is the Globin domain. O2 is bound at residue histidine 60. Residue histidine 89 coordinates heme b.

It belongs to the globin family. Hb 2 is a heterotetramer of two alpha-2 and two beta-2 chains. In terms of tissue distribution, red blood cells.

In terms of biological role, involved in oxygen transport from gills to the various peripheral tissues. The protein is Hemoglobin subunit alpha-2 (hba2) of Gadus morhua (Atlantic cod).